Here is a 215-residue protein sequence, read N- to C-terminus: Inositol diphosphatase DSP1 (215 aa).

A Tyrosine-protein phosphatase domain is found at 58-209; it reads NFSMVDNGIF…VSSFSHIPMS (152 aa). The segment at 114-126 is WPD loop important for active site topology; it reads FGIEGNKEPFVNI. Residues Asn125, Ile126, His129, and Lys130 each contribute to the 1D-myo-inositol hexakisphosphate site. Cys150 functions as the Phosphocysteine intermediate in the catalytic mechanism.

The protein belongs to the protein-tyrosine phosphatase family. Atypical dual-specificity phosphatase Siw14-like subfamily. As to quaternary structure, homodimer and homohexamer; behaves as a monomer in solution. In terms of tissue distribution, highly expressed in siliques and at lower levels in roots, leaves and flowers.

It catalyses the reaction 5-diphospho-1D-myo-inositol 1,2,3,4,6-pentakisphosphate + H2O = 1D-myo-inositol hexakisphosphate + phosphate + H(+). It carries out the reaction 1,5-bis(diphospho)-1D-myo-inositol 2,3,4,6-tetrakisphosphate + H2O = 1-diphospho-1D-myo-inositol 2,3,4,5,6-pentakisphosphate + phosphate + 2 H(+). The catalysed reaction is 3,5-bis(diphospho)-1D-myo-inositol 1,2,4,6-tetrakisphosphate + H2O = 3-diphospho-1D-myo-inositol 1,2,4,5,6-pentakisphosphate + phosphate + 2 H(+). The enzyme catalyses 6-diphospho-1D-myo-inositol pentakisphosphate + H2O = 1D-myo-inositol hexakisphosphate + phosphate + H(+). It catalyses the reaction 5-diphospho-1D-myo-inositol 1,3,4,6-tetrakisphosphate + H2O = 1D-myo-inositol 1,3,4,5,6-pentakisphosphate + phosphate + H(+). Its activity is regulated as follows. Inhibited by manganese, calcium and zinc ions but not magnesium ions. Its function is as follows. Cleaves the beta-phosphate at the 5-position of soluble inositol pyrophosphates. Has highest activity on 5-diphosphoinositol 1,2,3,4,6-pentakisphosphate (5-InsP(7)), 1,5-bis-diphosphoinositol 2,3,4,6-tetrakisphosphate (1,5-InsP(8)) and 3,5-InsP(8), but has weak activity against 1-diphosphoinositol 2,3,4,5,6-pentakisphosphate (1-InsP(7)). Dephosphorylates the phosphoinositides PI(3,4,5)P3, PI(3,5)P2, but not PI(3)P, PI(3,4)P2 or PI(4,5)P2. Possesses phosphotyrosine phosphatase activity in vitro, and can hydrolyze para-nitrophenyl phosphate, O-methylfluorescein phosphate, polyphosphate and ATP. The sequence is that of Inositol diphosphatase DSP1 from Arabidopsis thaliana (Mouse-ear cress).